The sequence spans 130 residues: Small ribosomal subunit protein uS9 (130 aa).

It belongs to the universal ribosomal protein uS9 family.

This chain is Small ribosomal subunit protein uS9, found in Clostridium perfringens (strain ATCC 13124 / DSM 756 / JCM 1290 / NCIMB 6125 / NCTC 8237 / Type A).